A 153-amino-acid chain; its full sequence is Fucose mutarotase (153 aa).

His24 acts as the Proton donor in catalysis. Substrate is bound at residue Asp32. Residue Asp69 is part of the active site. Residues Met79, Tyr119, Tyr137, and Asn139 each coordinate substrate. The active site involves Tyr119.

Belongs to the RbsD / FucU family. In terms of assembly, mainly homodimer, but also exists as homotetramer, homooctamer, and homodecamer. The homodimeric form seems catalytically inactive.

The enzyme catalyses alpha-L-fucose = beta-L-fucose. It functions in the pathway carbohydrate metabolism; L-fucose metabolism. In terms of biological role, involved in the interconversion between alpha- and beta-L-fucoses. L-Fucose (6-deoxy-L-galactose) exists as alpha-L-fucose (29.5%) and beta-L-fucose (70.5%), the beta-form is metabolized through the salvage pathway. GDP-L-fucose formed either by the de novo or salvage pathways is transported into the endoplasmic reticulum, where it serves as a substrate for N- and O-glycosylations by fucosyltransferases. Fucosylated structures expressed on cell surfaces or secreted in biological fluids are believed to play a critical role in cell-cell adhesion and recognition processes. The chain is Fucose mutarotase (FUOM) from Bos taurus (Bovine).